The sequence spans 397 residues: Linalool dehydratase/isomerase (397 aa).

Positions 1-26 (MRFTLKTTAIVSAAALLAGFGPPPRA) are cleaved as a signal peptide. The active-site Proton donor/acceptor is the aspartate 64. 2 disulfide bridges follow: cysteine 74-cysteine 127 and cysteine 196-cysteine 205. Cysteine 196 contacts (2E)-geraniol.

In terms of assembly, homotetramer. Homopentamer.

Its subcellular location is the periplasm. The catalysed reaction is (S)-linalool = beta-myrcene + H2O. The enzyme catalyses (2E)-geraniol = (S)-linalool. It participates in terpene metabolism; monoterpene degradation. Is inhibited by molecular oxygen, high salt concentrations (NaCl, KCl, or MgCl(2)), urea, and Ti(III)citrate. Activity is not affected by EDTA. Functionally, anaerobically catalyzes the stereospecific hydration of beta-myrcene to (3S)-linalool and the isomerization of (3S)-linalool to geraniol. Is thus involved in the initial steps of the anaerobic degradation of the monoterpene beta-myrcene. Also catalyzes the reverse reactions, i.e. the isomerization of geraniol to linalool and the dehydration of linalool to myrcene. In this direction, the formation of myrcene from geraniol may be seen as a detoxification process for the monoterpene alcohol. Shows a relatively broad substrate specificity and can use various geraniol and linalool derivatives. Substrates required a specific alpha-methylallyl alcohol signature motif. Neither the monoterpenes alpha- and beta-ocimene nor the monoterpenoids citronellol and nerol can be used as substrates. The polypeptide is Linalool dehydratase/isomerase (Castellaniella defragrans (strain DSM 12143 / CCUG 39792 / 65Phen) (Alcaligenes defragrans)).